The sequence spans 294 residues: Cytidine deaminase (294 aa).

CMP/dCMP-type deaminase domains are found at residues 48–168 and 186–294; these read DEDA…FGPK and LTGD…VLLA. 89–91 is a binding site for substrate; that stretch reads NME. A Zn(2+)-binding site is contributed by His-102. Glu-104 (proton donor) is an active-site residue. Zn(2+)-binding residues include Cys-129 and Cys-132.

The protein belongs to the cytidine and deoxycytidylate deaminase family. Homodimer. Zn(2+) is required as a cofactor.

The enzyme catalyses cytidine + H2O + H(+) = uridine + NH4(+). It carries out the reaction 2'-deoxycytidine + H2O + H(+) = 2'-deoxyuridine + NH4(+). Its function is as follows. This enzyme scavenges exogenous and endogenous cytidine and 2'-deoxycytidine for UMP synthesis. This Escherichia coli O139:H28 (strain E24377A / ETEC) protein is Cytidine deaminase.